The sequence spans 861 residues: Isoleucine--tRNA ligase (861 aa).

Positions proline 57–histidine 67 match the 'HIGH' region motif. Glutamate 549 is a binding site for L-isoleucyl-5'-AMP. Residues lysine 590 to serine 594 carry the 'KMSKS' region motif. An ATP-binding site is contributed by lysine 593.

It belongs to the class-I aminoacyl-tRNA synthetase family. IleS type 1 subfamily. Monomer.

It is found in the cytoplasm. It carries out the reaction tRNA(Ile) + L-isoleucine + ATP = L-isoleucyl-tRNA(Ile) + AMP + diphosphate. In terms of biological role, catalyzes the attachment of isoleucine to tRNA(Ile). As IleRS can inadvertently accommodate and process structurally similar amino acids such as valine, to avoid such errors it has two additional distinct tRNA(Ile)-dependent editing activities. One activity is designated as 'pretransfer' editing and involves the hydrolysis of activated Val-AMP. The other activity is designated 'posttransfer' editing and involves deacylation of mischarged Val-tRNA(Ile). This Mycoplasma pneumoniae (strain ATCC 29342 / M129 / Subtype 1) (Mycoplasmoides pneumoniae) protein is Isoleucine--tRNA ligase.